We begin with the raw amino-acid sequence, 138 residues long: Protein FAM136A (138 aa).

Belongs to the FAM136 family.

This chain is Protein FAM136A (fam136a), found in Xenopus tropicalis (Western clawed frog).